Reading from the N-terminus, the 100-residue chain is NADH-quinone oxidoreductase subunit K (100 aa).

3 helical membrane-spanning segments follow: residues 2–22 (IGLTHYLILASLVFVIGLVGI), 29–49 (IMLFFSSEILLNSANIALAAI), and 60–80 (IIAFFIVAIAASEVAVGLGLL).

Belongs to the complex I subunit 4L family. As to quaternary structure, NDH-1 is composed of 14 different subunits. Subunits NuoA, H, J, K, L, M, N constitute the membrane sector of the complex.

It localises to the cell inner membrane. The catalysed reaction is a quinone + NADH + 5 H(+)(in) = a quinol + NAD(+) + 4 H(+)(out). Functionally, NDH-1 shuttles electrons from NADH, via FMN and iron-sulfur (Fe-S) centers, to quinones in the respiratory chain. The immediate electron acceptor for the enzyme in this species is believed to be ubiquinone. Couples the redox reaction to proton translocation (for every two electrons transferred, four hydrogen ions are translocated across the cytoplasmic membrane), and thus conserves the redox energy in a proton gradient. In Campylobacter concisus (strain 13826), this protein is NADH-quinone oxidoreductase subunit K.